A 625-amino-acid polypeptide reads, in one-letter code: tRNA uridine 5-carboxymethylaminomethyl modification enzyme MnmG (625 aa).

Gly-11–Gly-16 is a binding site for FAD. Gly-271 to Phe-285 is an NAD(+) binding site.

This sequence belongs to the MnmG family. In terms of assembly, homodimer. Heterotetramer of two MnmE and two MnmG subunits. It depends on FAD as a cofactor.

The protein resides in the cytoplasm. NAD-binding protein involved in the addition of a carboxymethylaminomethyl (cmnm) group at the wobble position (U34) of certain tRNAs, forming tRNA-cmnm(5)s(2)U34. The sequence is that of tRNA uridine 5-carboxymethylaminomethyl modification enzyme MnmG from Porphyromonas gingivalis (strain ATCC BAA-308 / W83).